Here is a 1531-residue protein sequence, read N- to C-terminus: Nuclear factor of activated T-cells 5 (1531 aa).

2 disordered regions span residues 34-89 and 114-141; these read ELQL…TSSS and VSNR…RHTV. Residues 41–51 are compositionally biased toward polar residues; sequence RETSVASMSQT. The segment covering 63–89 has biased composition (low complexity); sequence VVAADASSAPSSSSMGGACSSFTTSSS. Serine 120 carries the post-translational modification Phosphoserine. Position 122 is an N6-acetyllysine (lysine 122). The segment covering 122 to 134 has biased composition (polar residues); it reads KQLTSNTVQQHPS. Serine 134 carries the post-translational modification Phosphoserine. Threonine 135 is modified (phosphothreonine; by CDK5). Serine 155 is subject to Phosphoserine. Disordered regions lie at residues 175–220 and 241–265; these read WMED…CEES and TTDN…GVKK. Low complexity predominate over residues 179–192; that stretch reads SPSNFSNMSTSSYN. Over residues 200–212 the composition is skewed to basic residues; sequence KSRKRNPKQRPGV. Residues 241-260 show a composition bias toward polar residues; sequence TTDNKGNSKAGNGTLENQKG. The RHD domain maps to 264–443; it reads KKSPMLCGQY…SPILCTQPAG (180 aa). A DNA-binding region spans residues 293–300; that stretch reads RARYLTEG. Residue lysine 556 forms a Glycyl lysine isopeptide (Lys-Gly) (interchain with G-Cter in SUMO1); alternate linkage. Lysine 556 is covalently cross-linked (Glycyl lysine isopeptide (Lys-Gly) (interchain with G-Cter in SUMO2); alternate). Serine 561 carries the phosphoserine modification. Glycyl lysine isopeptide (Lys-Gly) (interchain with G-Cter in SUMO2) cross-links involve residues lysine 573 and lysine 603. Disordered stretches follow at residues 640 to 666, 841 to 891, 958 to 996, 1211 to 1304, 1316 to 1371, and 1473 to 1502; these read NIAG…QQIQ, VSPG…QVME, PPAV…TGTQ, PQVA…QEQQ, APMN…QEQQ, and ISQP…SPLA. Residues 646–656 show a composition bias toward low complexity; it reads SFSSPSSSHLP. 2 stretches are compositionally biased toward polar residues: residues 841–852 and 869–878; these read VSPGMFSSTEPT and HPQSENTLSN. 2 stretches are compositionally biased toward low complexity: residues 879–888 and 960–980; these read QQQQQQQQQQ and AVSG…PGTT. 2 stretches are compositionally biased toward polar residues: residues 981–996 and 1224–1247; these read MFQT…TGTQ and PQSQ…NSPS. Positions 1248 to 1266 are enriched in low complexity; it reads QEQQQQQQQQQQQQQQQQQ. Composition is skewed to polar residues over residues 1267-1278 and 1291-1304; these read SILFSNQNTMAT and FNPN…QEQQ. The span at 1320–1330 shows a compositional bias: low complexity; sequence QEQQPMQFQSQ. The segment covering 1331 to 1371 has biased composition (polar residues); the sequence is STVSSLQNPGPTQSESSQTPLFHSSPQIQLVQGSPSSQEQQ. A compositionally biased stretch (low complexity) spans 1475-1486; it reads QPGQPQNEGQPP. Polar residues predominate over residues 1487–1502; the sequence is VTTLLSQQMPENSPLA.

As to quaternary structure, homodimer when bound to DNA, completely encircles its DNA target. Interacts with CIDEC; this interaction is direct and retains NFAT5 in the cytoplasm. Does not bind with Fos and Jun transcription factors. Interacts with DDX5 and DDX17; this interaction leads to DDX5/DDX17 recruitment to LNC2 and S100A4 promoters and NFAT5-mediated DDX5/DDX17-enhanced transactivation. Phosphorylated. Phosphorylated at Thr-135 by CDK5 in response to osmotic stress; this phosphorylation mediates its rapid nuclear localization. In terms of processing, poly-ADP-ribosylated by PARP1 in response to DNA damage, promoting recruitment to sites of R-loop-associated DNA damage. Widely expressed, with highest levels in skeletal muscle, brain, heart and peripheral blood leukocytes.

The protein localises to the nucleus. It localises to the cytoplasm. It is found in the chromosome. Transcription factor involved, among others, in the transcriptional regulation of osmoprotective and inflammatory genes. Binds the DNA consensus sequence 5'-[ACT][AG]TGGAAA[CAT]A[TA][ATC][CA][ATG][GT][GAC][CG][CT]-3'. Mediates the transcriptional response to hypertonicity. Positively regulates the transcription of LCN2 and S100A4 genes; optimal transactivation of these genes requires the presence of DDX5/DDX17. Also involved in the DNA damage response by preventing formation of R-loops; R-loops are composed of a DNA:RNA hybrid and the associated non-template single-stranded DNA. The chain is Nuclear factor of activated T-cells 5 from Homo sapiens (Human).